We begin with the raw amino-acid sequence, 759 residues long: Glycerol-3-phosphate O-acyltransferase 1 (759 aa).

The Lumenal segment spans residues 1 to 48 (MPAPKLTEKFASSKSTQKTTNYSSIEAKSVKTSADQAYIYQEPSATKK). Residues 49–69 (ILYSIATWLLYNIFHCFFREI) form a helical membrane-spanning segment. Residues 70–434 (RGRGSFKVPQ…AKVNFAKNLG (365 aa)) are Cytoplasmic-facing. Positions 414–419 (HYNLPD) match the HXXXXD motif motif. Residues 435 to 449 (LVFFRSIGLCILFSL) traverse the membrane as a helical segment. Residue A450 is a topological domain, lumenal. The chain crosses the membrane as a helical span at residues 451-465 (MPGIIMFSPVFILAK). Over 466-493 (RISQEKARTALSKSTVKIKANDVIATWK) the chain is Cytoplasmic. A helical membrane pass occupies residues 494-514 (ILIGMGFAPLLYIFWSVLITY). Over 515-523 (YLRHKPWNK) the chain is Lumenal. A helical transmembrane segment spans residues 524-544 (IYVFSGSYISCVIVTYSALIV). Residues 545-759 (GDIGMDGFKS…EEEEGKEGDA (215 aa)) lie on the Cytoplasmic side of the membrane. Disordered regions lie at residues 613–667 (EEDR…SLVN), 684–705 (RKSE…EFEV), and 729–759 (IGEN…EGDA). The segment covering 647–659 (RDNHDAYEHHNQD) has biased composition (basic and acidic residues). Over residues 688–702 (SSLASTSVAPSSSSE) the composition is skewed to low complexity. Acidic residues predominate over residues 736-759 (EEEEEEEEEEEEEEEEEEGKEGDA).

It belongs to the GPAT/DAPAT family.

The protein resides in the endoplasmic reticulum membrane. It carries out the reaction sn-glycerol 3-phosphate + an acyl-CoA = a 1-acyl-sn-glycero-3-phosphate + CoA. It catalyses the reaction dihydroxyacetone phosphate + an acyl-CoA = a 1-acylglycerone 3-phosphate + CoA. The catalysed reaction is sn-glycerol 3-phosphate + hexadecanoyl-CoA = 1-hexadecanoyl-sn-glycero-3-phosphate + CoA. The enzyme catalyses (9Z)-hexadecenoyl-CoA + sn-glycerol 3-phosphate = 1-(9Z-hexadecenoyl)-sn-glycero-3-phosphate + CoA. It carries out the reaction sn-glycerol 3-phosphate + octadecanoyl-CoA = 1-octadecanoyl-sn-glycero-3-phosphate + CoA. It catalyses the reaction sn-glycerol 3-phosphate + (9Z)-octadecenoyl-CoA = 1-(9Z-octadecenoyl)-sn-glycero-3-phosphate + CoA. It participates in phospholipid metabolism; CDP-diacylglycerol biosynthesis; CDP-diacylglycerol from sn-glycerol 3-phosphate: step 1/3. Functionally, dual substrate-specific glycerol-3-phosphate/dihydroxyacetone phosphate sn-1 acyltransferase, catalyzing the first and committed reaction in the de novo synthesis of glycerophospholipids and triacylglycerols (TAGs). Prefers Gly-3-P over dihydroxyacetone phosphate and has a marked preference for 16-carbon fatty acyl chains. Transfers a fatty acid from fatty acyl-CoA to the sn-1 position of glycerol-3-phosphate to produce lysophosphatidic acid (LysoPA). These lipids not only are precursors of glycerolipids, but also are dynamic components of signal transduction systems that control cell physiology. SCT1 is the primary supplier of diacylglycerols (DAG), used mainly in TAG synthesis and phosphatidylcholine (PC) synthesis through the CDP-choline pathway. Regulates fatty acid desaturation, that is, the ratio of unsaturated versus saturated fatty acyl chains, by competing with the desaturase OLE1 for the common substrate C16:0-CoA. Sequesters C16:0-CoA into lipids, thereby shielding it from desaturation by OLE1. The polypeptide is Glycerol-3-phosphate O-acyltransferase 1 (Saccharomyces cerevisiae (strain ATCC 204508 / S288c) (Baker's yeast)).